The primary structure comprises 476 residues: PTS system N-acetylmuramic acid-specific EIIBC component (476 aa).

One can recognise a PTS EIIB type-1 domain in the interval 1 to 89 (MATIDNAMIH…KASLGDNMSS (89 aa)). C28 acts as the Phosphocysteine intermediate; for EIIB activity in catalysis. One can recognise a PTS EIIC type-1 domain in the interval 116 to 476 (AKFATIFTPL…FFATKDVDLS (361 aa)). 10 helical membrane passes run 118-138 (FATI…LLGL), 160-180 (LIAY…ILIG), 186-206 (AFGG…LGYN), 220-240 (FFGL…AAIV), 265-285 (TLLI…VYLF), 304-324 (VLAG…FVPV), 337-357 (LFPV…ALYF), 371-391 (GAII…VTLP), 396-416 (FITA…IAYL), and 443-463 (VLPA…TGFI).

It is found in the cell inner membrane. It catalyses the reaction N-acetyl-beta-D-muramate(out) + N(pros)-phospho-L-histidyl-[protein] = N-acetyl-beta-D-muramate 6-phosphate(in) + L-histidyl-[protein]. Its function is as follows. The phosphoenolpyruvate-dependent sugar phosphotransferase system (sugar PTS), a major carbohydrate active transport system, catalyzes the phosphorylation of incoming sugar substrates concomitantly with their translocation across the cell membrane. This system is involved in N-acetylmuramic acid (MurNAc) transport, yielding cytoplasmic MurNAc-6-P. Is also able to take up anhydro-N-acetylmuramic acid (anhMurNAc), but cannot phosphorylate the carbon 6, probably because of the 1,6-anhydro ring. In Pasteurella multocida (strain Pm70), this protein is PTS system N-acetylmuramic acid-specific EIIBC component (murP).